The chain runs to 318 residues: Oxygen-evolving enhancer protein 1, chloroplastic (318 aa).

A signal peptide spans M1–A18. Residues A45–I65 form a helical membrane-spanning segment.

It belongs to the PsbO family.

The protein resides in the plastid. The protein localises to the chloroplast thylakoid membrane. Functionally, stabilizes the manganese cluster which is the primary site of water splitting. The protein is Oxygen-evolving enhancer protein 1, chloroplastic of Chattonella marina var. antiqua (Red tide flagellate).